Here is a 144-residue protein sequence, read N- to C-terminus: NADH dehydrogenase [ubiquinone] 1 alpha subcomplex subunit 13 (144 aa).

A2 bears the N-acetylalanine mark. A helical membrane pass occupies residues L30–M51.

The protein belongs to the complex I NDUFA13 subunit family. Complex I is composed of 45 different subunits. Interacts with CARD15, but not with CARD4. Interacts with STAT3, but not with STAT1, STAT2 and STAT5A. Interacts with OLFM4.

It localises to the mitochondrion inner membrane. The protein resides in the nucleus. Its function is as follows. Accessory subunit of the mitochondrial membrane respiratory chain NADH dehydrogenase (Complex I), that is believed not to be involved in catalysis. Complex I functions in the transfer of electrons from NADH to the respiratory chain. The immediate electron acceptor for the enzyme is believed to be ubiquinone. Involved in the interferon/all-trans-retinoic acid (IFN/RA) induced cell death. This apoptotic activity is inhibited by interaction with viral IRF1. Prevents the transactivation of STAT3 target genes. May play a role in CARD15-mediated innate mucosal responses and serve to regulate intestinal epithelial cell responses to microbes. The protein is NADH dehydrogenase [ubiquinone] 1 alpha subcomplex subunit 13 (Ndufa13) of Mus musculus (Mouse).